We begin with the raw amino-acid sequence, 282 residues long: 2-dehydro-3-deoxyphosphooctonate aldolase (282 aa).

It belongs to the KdsA family.

It is found in the cytoplasm. The catalysed reaction is D-arabinose 5-phosphate + phosphoenolpyruvate + H2O = 3-deoxy-alpha-D-manno-2-octulosonate-8-phosphate + phosphate. The protein operates within carbohydrate biosynthesis; 3-deoxy-D-manno-octulosonate biosynthesis; 3-deoxy-D-manno-octulosonate from D-ribulose 5-phosphate: step 2/3. It participates in bacterial outer membrane biogenesis; lipopolysaccharide biosynthesis. This chain is 2-dehydro-3-deoxyphosphooctonate aldolase, found in Chromobacterium violaceum (strain ATCC 12472 / DSM 30191 / JCM 1249 / CCUG 213 / NBRC 12614 / NCIMB 9131 / NCTC 9757 / MK).